A 475-amino-acid chain; its full sequence is Cytosolic non-specific dipeptidase (475 aa).

Ala-2 is subject to N-acetylalanine. Lys-9 bears the N6-acetyllysine mark. The residue at position 58 (Ser-58) is a Phosphoserine. His-99 is a binding site for Mn(2+). The active site involves Asp-101. Asp-132 is a Mn(2+) binding site. The active-site Proton acceptor is Glu-166. Substrate contacts are provided by residues 166 to 167 (EE), Asp-195, and His-228. Residues Glu-167 and Asp-195 each contribute to the Mn(2+) site. Ser-299 carries the post-translational modification Phosphoserine. Substrate-binding residues include Thr-330, Arg-343, Ser-417, and His-445. His-445 contributes to the Mn(2+) binding site.

It belongs to the peptidase M20A family. In terms of assembly, homodimer. Requires Mn(2+) as cofactor.

It localises to the cytoplasm. It carries out the reaction Hydrolysis of dipeptides, preferentially hydrophobic dipeptides including prolyl amino acids.. The catalysed reaction is L-threonyl-L-threonine + H2O = 2 L-threonine. It catalyses the reaction L-threonyl-L-serine + H2O = L-threonine + L-serine. The enzyme catalyses L-seryl-L-threonine + H2O = L-threonine + L-serine. It carries out the reaction L-cysteinylglycine + H2O = L-cysteine + glycine. The catalysed reaction is (S)-lactate + L-phenylalanine = N-[(S)-lactoyl]-L-phenylalanine + H2O. Functionally, catalyzes the peptide bond hydrolysis in dipeptides, displaying a non-redundant activity toward threonyl dipeptides. Mediates threonyl dipeptide catabolism in a tissue-specific way. Has high dipeptidase activity toward cysteinylglycine, an intermediate metabolite in glutathione metabolism. Metabolizes N-lactoyl-amino acids, both through hydrolysis to form lactic acid and amino acids, as well as through their formation by reverse proteolysis. Plays a role in the regulation of cell cycle arrest and apoptosis. In Pongo abelii (Sumatran orangutan), this protein is Cytosolic non-specific dipeptidase (CNDP2).